The following is a 620-amino-acid chain: tRNA uridine 5-carboxymethylaminomethyl modification enzyme MnmG (620 aa).

FAD contacts are provided by residues 13–18 (GGGHAG), Val-125, and Ser-182. 280-294 (GPRYCPSVEDKIVKF) provides a ligand contact to NAD(+). Asn-377 is an FAD binding site.

Belongs to the MnmG family. In terms of assembly, homodimer. Heterotetramer of two MnmE and two MnmG subunits. FAD is required as a cofactor.

It localises to the cytoplasm. Its function is as follows. NAD-binding protein involved in the addition of a carboxymethylaminomethyl (cmnm) group at the wobble position (U34) of certain tRNAs, forming tRNA-cmnm(5)s(2)U34. This is tRNA uridine 5-carboxymethylaminomethyl modification enzyme MnmG from Sulfurihydrogenibium sp. (strain YO3AOP1).